A 103-amino-acid chain; its full sequence is Integration host factor subunit alpha (103 aa).

A disordered region spans residues 55-74 (CREKPQRPGRNPKTGEEMPI).

This sequence belongs to the bacterial histone-like protein family. Heterodimer of an alpha and a beta chain.

Its function is as follows. This protein is one of the two subunits of integration host factor, a specific DNA-binding protein that functions in genetic recombination as well as in transcriptional and translational control. The protein is Integration host factor subunit alpha of Thiobacillus denitrificans (strain ATCC 25259 / T1).